Reading from the N-terminus, the 525-residue chain is GMP synthase [glutamine-hydrolyzing] (525 aa).

One can recognise a Glutamine amidotransferase type-1 domain in the interval 9–207 (RILILDFGSQ…VLDVCQCEAL (199 aa)). Residue Cys-86 is the Nucleophile of the active site. Catalysis depends on residues His-181 and Glu-183. One can recognise a GMPS ATP-PPase domain in the interval 208–400 (WTPASIIEDT…LGLPYDMLNR (193 aa)). 235–241 (SGGVDSS) is a binding site for ATP.

In terms of assembly, homodimer.

It catalyses the reaction XMP + L-glutamine + ATP + H2O = GMP + L-glutamate + AMP + diphosphate + 2 H(+). It functions in the pathway purine metabolism; GMP biosynthesis; GMP from XMP (L-Gln route): step 1/1. Functionally, catalyzes the synthesis of GMP from XMP. In Photorhabdus laumondii subsp. laumondii (strain DSM 15139 / CIP 105565 / TT01) (Photorhabdus luminescens subsp. laumondii), this protein is GMP synthase [glutamine-hydrolyzing].